Here is a 472-residue protein sequence, read N- to C-terminus: Pentatricopeptide repeat-containing protein At5g46100 (472 aa).

PPR repeat units follow at residues 50 to 84 (DQSS…NCVV), 85 to 119 (SEDI…DCDP), 120 to 154 (SQKA…GLPP), 155 to 190 (TVAS…GCDP), 191 to 225 (DSYT…DCAP), 226 to 260 (TVVT…GIEP), 261 to 295 (NVFT…GCRP), 296 to 330 (NMVT…GLKP), 331 to 365 (DAGL…GITP), 373 to 406 (HVKT…GISV), and 407 to 441 (EVET…GCIP).

This sequence belongs to the PPR family. P subfamily.

The sequence is that of Pentatricopeptide repeat-containing protein At5g46100 from Arabidopsis thaliana (Mouse-ear cress).